The chain runs to 309 residues: Tagatose-6-phosphate kinase (309 aa).

The protein belongs to the carbohydrate kinase PfkB family. LacC subfamily.

It carries out the reaction D-tagatofuranose 6-phosphate + ATP = D-tagatofuranose 1,6-bisphosphate + ADP + H(+). Its pathway is carbohydrate metabolism; D-tagatose 6-phosphate degradation; D-glyceraldehyde 3-phosphate and glycerone phosphate from D-tagatose 6-phosphate: step 1/2. The polypeptide is Tagatose-6-phosphate kinase (Streptococcus pyogenes serotype M12 (strain MGAS2096)).